Reading from the N-terminus, the 200-residue chain is MTTAATPRLRIGVMGGTFDPIHNGHLVAASEVQQHLQLDEVIFVPTGQPWQKQTVTDGEHRYLMTVIATAANPRFTVSRVDIDRAGTTYTIDTLRDIRRTHPDAELFFITGADAIQQILGWKDVAELWDLAHFVAVTRPGHDLTESGLPHADVRLLEVPALAISSTDCRARVGRGFPVWYLVPDGVVQYISKHHLYRSPL.

It belongs to the NadD family.

It carries out the reaction nicotinate beta-D-ribonucleotide + ATP + H(+) = deamido-NAD(+) + diphosphate. Its pathway is cofactor biosynthesis; NAD(+) biosynthesis; deamido-NAD(+) from nicotinate D-ribonucleotide: step 1/1. Functionally, catalyzes the reversible adenylation of nicotinate mononucleotide (NaMN) to nicotinic acid adenine dinucleotide (NaAD). The polypeptide is Probable nicotinate-nucleotide adenylyltransferase (Clavibacter sepedonicus (Clavibacter michiganensis subsp. sepedonicus)).